Reading from the N-terminus, the 209-residue chain is Ribosome maturation factor RimM (209 aa).

One can recognise a PRC barrel domain in the interval 103-178; it reads EGATYVSDLV…RIEMVLPQGM (76 aa). Positions 184-209 are disordered; sequence PLSKAEKERQKSEADETREAGERRKR. Residues 187–209 are compositionally biased toward basic and acidic residues; it reads KAEKERQKSEADETREAGERRKR.

Belongs to the RimM family. Binds ribosomal protein uS19.

It localises to the cytoplasm. Its function is as follows. An accessory protein needed during the final step in the assembly of 30S ribosomal subunit, possibly for assembly of the head region. Essential for efficient processing of 16S rRNA. May be needed both before and after RbfA during the maturation of 16S rRNA. It has affinity for free ribosomal 30S subunits but not for 70S ribosomes. The polypeptide is Ribosome maturation factor RimM (Koribacter versatilis (strain Ellin345)).